Consider the following 251-residue polypeptide: MILLKIIHIIFVMIFLSIFFPKSLYASTSLIRKDHIIQKNLENFDDQSAYALGVSLGNYINHSFREQKRLGVILDKNSLLSGIRDSLSGKTILSDQEISMELIKLEKKLKYFEDIVLKKEAHNNKIQGDLYIKKMLKKKDARHTSSGLVFFIKKKGSGKFLHDSDVITVHYKGSLINGNEFDNSYKRGQPLSFSLDSVIPGWIEGLKYIKKGGLIKLVIPPKLAYGETGVPGIPGNSTLIFEIELIDIQSK.

A PPIase FKBP-type domain is found at 164–251; that stretch reads SDVITVHYKG…EIELIDIQSK (88 aa).

Belongs to the FKBP-type PPIase family.

The enzyme catalyses [protein]-peptidylproline (omega=180) = [protein]-peptidylproline (omega=0). In terms of biological role, PPIases accelerate the folding of proteins. It catalyzes the cis-trans isomerization of proline imidic peptide bonds in oligopeptides. The polypeptide is FKBP-type peptidyl-prolyl cis-trans isomerase FkpA (fkpA) (Buchnera aphidicola subsp. Baizongia pistaciae (strain Bp)).